Consider the following 328-residue polypeptide: 2-hydroxyisoflavanone dehydratase (328 aa).

The short motif at 85 to 87 (HGG) is the Involved in the stabilization of the negatively charged intermediate by the formation of the oxyanion hole element. Active-site residues include Thr-173, Asp-272, and His-304.

It belongs to the 'GDXG' lipolytic enzyme family.

The catalysed reaction is (2R,3S)-2,4',7-trihydroxyisoflavanone = daidzein + H2O + H(+). The enzyme catalyses 2-hydroxy-2,3-dihydrogenistein = genistein + H2O + H(+). It catalyses the reaction a carboxylic ester + H2O = an alcohol + a carboxylate + H(+). It participates in secondary metabolite biosynthesis; flavonoid biosynthesis. Its function is as follows. Dehydratase that mediates the biosynthesis of isoflavonoids. Can better use 2,7-dihydroxy-4'-methoxyisoflavanone as substrate. Has also a slight carboxylesterase activity toward p-nitrophenyl butyrate. The polypeptide is 2-hydroxyisoflavanone dehydratase (HIDM) (Glycyrrhiza echinata (Licorice)).